Here is a 279-residue protein sequence, read N- to C-terminus: Thymidylate synthase (279 aa).

Residue 133–134 coordinates dUMP; that stretch reads RR. The active-site Nucleophile is cysteine 154. Residues 178-181, asparagine 189, and 219-221 contribute to the dUMP site; these read RSND and HIY. Aspartate 181 contributes to the (6R)-5,10-methylene-5,6,7,8-tetrahydrofolate binding site. Alanine 278 contributes to the (6R)-5,10-methylene-5,6,7,8-tetrahydrofolate binding site.

It belongs to the thymidylate synthase family. Bacterial-type ThyA subfamily. As to quaternary structure, homodimer.

The protein localises to the cytoplasm. The enzyme catalyses dUMP + (6R)-5,10-methylene-5,6,7,8-tetrahydrofolate = 7,8-dihydrofolate + dTMP. It functions in the pathway pyrimidine metabolism; dTTP biosynthesis. In terms of biological role, catalyzes the reductive methylation of 2'-deoxyuridine-5'-monophosphate (dUMP) to 2'-deoxythymidine-5'-monophosphate (dTMP) while utilizing 5,10-methylenetetrahydrofolate (mTHF) as the methyl donor and reductant in the reaction, yielding dihydrofolate (DHF) as a by-product. This enzymatic reaction provides an intracellular de novo source of dTMP, an essential precursor for DNA biosynthesis. This is Thymidylate synthase from Streptococcus mutans serotype c (strain ATCC 700610 / UA159).